Here is a 294-residue protein sequence, read N- to C-terminus: Golgi phosphoprotein 3 homolog sauron (294 aa).

The interval 1 to 52 is disordered; the sequence is MNRSDGLVRRSVKPRENGGAEGGLNANTPDDNQDALDNLKDQEDNIDDGDSK. Residues 37–52 show a composition bias toward basic and acidic residues; the sequence is DNLKDQEDNIDDGDSK. The a 1,2-diacyl-sn-glycero-3-phospho-(1D-myo-inositol 4-phosphate) site is built by W77, R86, K167, and R170. The beta-hairpin required for oligomerization stretch occupies residues 186 to 197; that stretch reads EKQNFLLFDMTT.

Belongs to the GOLPH3/VPS74 family. Homooligomer. Interacts with botv, Ext2 and ttv. Interacts with Vti1. Interacts with Vps35, Rab5, Chc, Rab11, zip, Pav and Septin1.

The protein resides in the golgi apparatus membrane. The protein localises to the cytoplasmic vesicle. Its subcellular location is the cleavage furrow. In terms of biological role, phosphatidylinositol-4-phosphate-binding protein that links Golgi membranes to the cytoskeleton and may participate in the tensile force required for vesicle budding from the Golgi. Thereby, may play a role in Golgi membrane trafficking and could indirectly give its flattened shape to the Golgi apparatus. May also bind to the coatomer to regulate Golgi membrane trafficking. May play a role in anterograde transport from the Golgi to the plasma membrane and regulate secretion. Also involved in the control of the localization of Golgi enzymes through interaction with their cytoplasmic part. Functions in cytokinesis by regulating contractile ring formation and vesicle trafficking during cleavage furrow ingression. May also have a role in the intital steps of central spindle formation. Can also bind phosphatidylinositol-3-phosphate and phosphatidylinositol-5-phosphate in vitro. The polypeptide is Golgi phosphoprotein 3 homolog sauron (Drosophila melanogaster (Fruit fly)).